A 685-amino-acid polypeptide reads, in one-letter code: Amino acid transporter heavy chain SLC3A1 (685 aa).

The span at 1–10 (MDEDKGKRDP) shows a compositional bias: basic and acidic residues. The interval 1 to 53 (MDEDKGKRDPIQMSLKGCRTNNGFVQNEDIPEQDPDPGSRDTPQPNAVSIPAP) is disordered. Topologically, residues 1 to 88 (MDEDKGKRDP…ARYRVPREIL (88 aa)) are cytoplasmic. The chain crosses the membrane as a helical; Signal-anchor for type II membrane protein span at residues 89–109 (FWLTVVSVFLLIGATIAIIVI). At 110 to 685 (SPKCLDWWQA…SALDILYSSC (576 aa)) the chain is on the extracellular side. Asparagine 213 contacts Ca(2+). Residues asparagine 213, asparagine 240, and asparagine 260 are each glycosylated (N-linked (GlcNAc...) asparagine). The cysteines at positions 241 and 272 are disulfide-linked. The Ca(2+) site is built by aspartate 283, phenylalanine 317, leucine 318, and glutamate 320. Asparagine 331 carries an N-linked (GlcNAc...) asparagine glycan. Phosphoserine is present on serine 385. N-linked (GlcNAc...) asparagine glycosylation is found at asparagine 512 and asparagine 522. 2 cysteine pairs are disulfide-bonded: cysteine 570–cysteine 666 and cysteine 673–cysteine 685.

Disulfide-linked heterodimer composed of the catalytic light subunit SLC7A9 and the heavy subunit SLC3A1. The heterodimer is the minimal functional unit. Assembles in non-covalently linked heterotetramers (dimers of heterodimers) and higher order oligomers; the oligomerization is mediated by SLC3A1 likely to prevent degradation in the endoplasmic reticulum and facilitate heteromer trafficking to the plasma membrane. Disulfide-linked heterodimer composed of the catalytic light subunit SLC7A13 and the heavy subunit SLC3A1. In terms of tissue distribution, expressed in the brush border membrane in the kidney (at protein level). Highly expressed in renal tubules in the outer stripe of the outer medulla and medullary ray (at protein level). Also detected in the renal cortex. More abundant in male than female kidneys.

It is found in the cell membrane. Its subcellular location is the apical cell membrane. In terms of biological role, acts as a chaperone that facilitates biogenesis and trafficking of functional transporter heteromers to the plasma membrane. Associates with SLC7A9 to form a functional transporter complex that mediates the electrogenic exchange between cationic amino acids and neutral amino acids, with a stoichiometry of 1:1. SLC7A9-SLC3A1 transporter has system b(0,+)-like activity with high affinity for extracellular cationic amino acids and L-cystine and lower affinity for intracellular neutral amino acids. Substrate exchange is driven by high concentration of intracellular neutral amino acids and the intracellular reduction of L-cystine to L-cysteine. SLC7A9-SLC3A1 acts as a major transporter for reabsorption of L-cystine and dibasic amino acids across the brush border membrane in early proximal tubules. Associates with SLC7A13 to form a functional complex that transports anionic and neutral amino acids via exchange or facilitated diffusion. SLC7A13-SLC3A1 may act as a major transporter for L-cystine in late proximal tubules, ensuring its reabsorption from the luminal fluid in exchange for cytosolic L-glutamate or L-aspartate. The sequence is that of Amino acid transporter heavy chain SLC3A1 from Mus musculus (Mouse).